Consider the following 414-residue polypeptide: Arrestin domain-containing protein 3 (414 aa).

2 short sequence motifs (PPxY motif) span residues 346-349 (PPSY) and 391-394 (PPLY). Residues 393–414 (LYSEIDPNPDQSSEDRPSCPSR) are disordered. Basic and acidic residues predominate over residues 405-414 (SEDRPSCPSR).

This sequence belongs to the arrestin family. As to quaternary structure, interacts (via PPxY motifs) with NEDD4 (via WW domains). Interacts with ADRB2. Interacts with ADRB3. Interacts with HGS (via PPxY motifs). Does not bind TXN (thioredoxin). Interacts with ITCH.

It is found in the cytoplasm. The protein localises to the cell membrane. It localises to the lysosome. Its subcellular location is the endosome. The protein resides in the early endosome. Adapter protein that plays a role in regulating cell-surface expression of adrenergic receptors and probably also other G protein-coupled receptors. Plays a role in NEDD4-mediated ubiquitination and endocytosis af activated ADRB2 and subsequent ADRB2 degradation. May recruit NEDD4 to ADRB2. Alternatively, may function as adapter protein that does not play a major role in recruiting NEDD4 to ADRB2, but rather plays a role in a targeting ADRB2 to endosomes. The protein is Arrestin domain-containing protein 3 (Arrdc3) of Rattus norvegicus (Rat).